A 476-amino-acid polypeptide reads, in one-letter code: Glycogen synthase (476 aa).

Lys-15 contributes to the ADP-alpha-D-glucose binding site.

The protein belongs to the glycosyltransferase 1 family. Bacterial/plant glycogen synthase subfamily.

The enzyme catalyses [(1-&gt;4)-alpha-D-glucosyl](n) + ADP-alpha-D-glucose = [(1-&gt;4)-alpha-D-glucosyl](n+1) + ADP + H(+). The protein operates within glycan biosynthesis; glycogen biosynthesis. Functionally, synthesizes alpha-1,4-glucan chains using ADP-glucose. The chain is Glycogen synthase from Halalkalibacterium halodurans (strain ATCC BAA-125 / DSM 18197 / FERM 7344 / JCM 9153 / C-125) (Bacillus halodurans).